The sequence spans 347 residues: Cytosolic sulfotransferase 14 (347 aa).

87-92 (KSGTTW) is a binding site for 3'-phosphoadenylyl sulfate. Catalysis depends on His-155, which acts as the Proton acceptor. 3'-phosphoadenylyl sulfate contacts are provided by residues Arg-177, Ser-185, Tyr-244, and 310–312 (RKG).

This sequence belongs to the sulfotransferase 1 family.

It localises to the cytoplasm. Sulfotransferase that utilizes 3'-phospho-5'-adenylyl sulfate (PAPS) as sulfonate donor. Not active with 11-hydroxyjasmonate or 12-hydroxyjasmonate. The chain is Cytosolic sulfotransferase 14 (SOT14) from Arabidopsis thaliana (Mouse-ear cress).